The following is a 248-amino-acid chain: 2,3-bisphosphoglycerate-dependent phosphoglycerate mutase (248 aa).

Residues 10 to 17 (RHGQSEWN), 23 to 24 (TG), Arg62, 89 to 92 (ERHY), Lys100, 116 to 117 (RR), and 183 to 184 (GN) each bind substrate. The Tele-phosphohistidine intermediate role is filled by His11. Catalysis depends on Glu89, which acts as the Proton donor/acceptor.

The protein belongs to the phosphoglycerate mutase family. BPG-dependent PGAM subfamily.

It catalyses the reaction (2R)-2-phosphoglycerate = (2R)-3-phosphoglycerate. The protein operates within carbohydrate degradation; glycolysis; pyruvate from D-glyceraldehyde 3-phosphate: step 3/5. Catalyzes the interconversion of 2-phosphoglycerate and 3-phosphoglycerate. The sequence is that of 2,3-bisphosphoglycerate-dependent phosphoglycerate mutase from Corynebacterium glutamicum (strain ATCC 13032 / DSM 20300 / JCM 1318 / BCRC 11384 / CCUG 27702 / LMG 3730 / NBRC 12168 / NCIMB 10025 / NRRL B-2784 / 534).